A 191-amino-acid chain; its full sequence is Peptidyl-tRNA hydrolase (191 aa).

Y17 is a binding site for tRNA. The Proton acceptor role is filled by H22. TRNA is bound by residues Y68, N70, and N116.

The protein belongs to the PTH family. In terms of assembly, monomer.

It is found in the cytoplasm. It catalyses the reaction an N-acyl-L-alpha-aminoacyl-tRNA + H2O = an N-acyl-L-amino acid + a tRNA + H(+). In terms of biological role, hydrolyzes ribosome-free peptidyl-tRNAs (with 1 or more amino acids incorporated), which drop off the ribosome during protein synthesis, or as a result of ribosome stalling. Catalyzes the release of premature peptidyl moieties from peptidyl-tRNA molecules trapped in stalled 50S ribosomal subunits, and thus maintains levels of free tRNAs and 50S ribosomes. The sequence is that of Peptidyl-tRNA hydrolase from Mycobacterium tuberculosis (strain ATCC 25177 / H37Ra).